The following is a 248-amino-acid chain: Probable uridine-cytidine kinase (248 aa).

Residue 15 to 23 (GGTSCGKST) participates in ATP binding. 5 residues coordinate substrate: Asp-73, Tyr-101, Arg-154, Arg-164, and Gln-172. ATP is bound at residue Asp-201. A disordered region spans residues 224 to 248 (SDEEEEKENELVKQGSFRRPFSRPH).

It belongs to the uridine kinase family.

It catalyses the reaction uridine + ATP = UMP + ADP + H(+). It carries out the reaction cytidine + ATP = CMP + ADP + H(+). It participates in pyrimidine metabolism; CTP biosynthesis via salvage pathway; CTP from cytidine: step 1/3. Its pathway is pyrimidine metabolism; UMP biosynthesis via salvage pathway; UMP from uridine: step 1/1. The chain is Probable uridine-cytidine kinase from Caenorhabditis elegans.